The sequence spans 80 residues: Exodeoxyribonuclease 7 small subunit (80 aa).

The protein belongs to the XseB family. Heterooligomer composed of large and small subunits.

Its subcellular location is the cytoplasm. The catalysed reaction is Exonucleolytic cleavage in either 5'- to 3'- or 3'- to 5'-direction to yield nucleoside 5'-phosphates.. In terms of biological role, bidirectionally degrades single-stranded DNA into large acid-insoluble oligonucleotides, which are then degraded further into small acid-soluble oligonucleotides. This chain is Exodeoxyribonuclease 7 small subunit, found in Pseudomonas putida (strain ATCC 700007 / DSM 6899 / JCM 31910 / BCRC 17059 / LMG 24140 / F1).